Consider the following 435-residue polypeptide: Light-independent protochlorophyllide reductase subunit N (435 aa).

3 residues coordinate [4Fe-4S] cluster: C23, C48, and C108.

This sequence belongs to the BchN/ChlN family. In terms of assembly, protochlorophyllide reductase is composed of three subunits; ChlL, ChlN and ChlB. Forms a heterotetramer of two ChlB and two ChlN subunits. Requires [4Fe-4S] cluster as cofactor.

The protein localises to the plastid. Its subcellular location is the chloroplast. It carries out the reaction chlorophyllide a + oxidized 2[4Fe-4S]-[ferredoxin] + 2 ADP + 2 phosphate = protochlorophyllide a + reduced 2[4Fe-4S]-[ferredoxin] + 2 ATP + 2 H2O. It functions in the pathway porphyrin-containing compound metabolism; chlorophyll biosynthesis (light-independent). Functionally, component of the dark-operative protochlorophyllide reductase (DPOR) that uses Mg-ATP and reduced ferredoxin to reduce ring D of protochlorophyllide (Pchlide) to form chlorophyllide a (Chlide). This reaction is light-independent. The NB-protein (ChlN-ChlB) is the catalytic component of the complex. The sequence is that of Light-independent protochlorophyllide reductase subunit N from Chlorella vulgaris (Green alga).